Reading from the N-terminus, the 429-residue chain is Probable alcohol acetyltransferase orf1 (429 aa).

It belongs to the alcohol acetyltransferase FCK4 family.

It participates in secondary metabolite biosynthesis. Functionally, probable alcohol acetyltransferase; part of the gene cluster that mediates the biosynthesis of the glycolipid biosurfactant ustilagic acid (UA). UA is a secreted cellobiose glycolipid that is toxic for many microorganisms and confers biocontrol activity to U.maydis. UA consists of 15,16-dihydroxypalmitic or 2,15,16-trihydroxypalmitic acid, which is O-glycosidically linked to cellobiose at its terminal hydroxyl group. In addition, the cellobiose moiety is acetylated and acylated with a short-chain hydroxy fatty acid. UA biosynthesis starts with omega-hydroxylation of palmitic acid catalyzed by the cytochrome P450 monooxygenase cyp1. Terminal hydroxylation of palmitic acid precedes subterminal hydroxylation catalyzed by the cytochrome P450 monooxygenase cyp2. Sequential glucosylation of the hydroxy fatty acid is probably catalyzed by the glycosyltransferase ugt1. The cellobiose lipid is further decorated by acetylation of the proximal glucose residue and by acylation with a short-chain beta-hydroxy fatty acid at the distal glucose residue. The acyltransferase uat1 may be a good candidate for catalyzing either acetylation or acylation of the cellobiose lipid. The fatty acid synthase fas2 may be involved in synthesis of the carbon backbone of the short-chain beta-hydroxy fatty acid esterified to the cellobiose disaccharide. The secreted UA consists of a mixture of both alpha-hydroxylated and non-hydroxylated glycolipids; therefore, alpha-hydroxylation of the long-chain fatty, catalyzed by the fatty acid hydroxylase ahd1, occurs late in UA biosynthesis and may be the last step before secretion. This chain is Probable alcohol acetyltransferase orf1, found in Mycosarcoma maydis (Corn smut fungus).